Here is a 182-residue protein sequence, read N- to C-terminus: ATP synthase subunit delta (182 aa).

Belongs to the ATPase delta chain family. As to quaternary structure, F-type ATPases have 2 components, F(1) - the catalytic core - and F(0) - the membrane proton channel. F(1) has five subunits: alpha(3), beta(3), gamma(1), delta(1), epsilon(1). F(0) has three main subunits: a(1), b(2) and c(10-14). The alpha and beta chains form an alternating ring which encloses part of the gamma chain. F(1) is attached to F(0) by a central stalk formed by the gamma and epsilon chains, while a peripheral stalk is formed by the delta and b chains.

Its subcellular location is the cell inner membrane. Functionally, f(1)F(0) ATP synthase produces ATP from ADP in the presence of a proton or sodium gradient. F-type ATPases consist of two structural domains, F(1) containing the extramembraneous catalytic core and F(0) containing the membrane proton channel, linked together by a central stalk and a peripheral stalk. During catalysis, ATP synthesis in the catalytic domain of F(1) is coupled via a rotary mechanism of the central stalk subunits to proton translocation. This protein is part of the stalk that links CF(0) to CF(1). It either transmits conformational changes from CF(0) to CF(1) or is implicated in proton conduction. This Cytophaga hutchinsonii (strain ATCC 33406 / DSM 1761 / CIP 103989 / NBRC 15051 / NCIMB 9469 / D465) protein is ATP synthase subunit delta.